Consider the following 2544-residue polypeptide: DNA polymerase theta (2544 aa).

Residues 1-13 (MSLPRRSRKRRRS) show a composition bias toward basic residues. The tract at residues 1–57 (MSLPRRSRKRRRSSSGSDTFSGDGDSFVSPQLRCGPVLSPPPGLGRGRRLTGTGTNK) is disordered. Low complexity predominate over residues 14-29 (SSGSDTFSGDGDSFVS). Residues Gln95 and 114–121 (APTSAGKT) contribute to the ATP site. The 185-residue stretch at 101 to 285 (LGHVLEGKNL…WLNAELYHTD (185 aa)) folds into the Helicase ATP-binding domain. Residues 101–551 (LGHVLEGKNL…STSQDMQTYA (451 aa)) form a helicase activity region. The DEAH box signature appears at 215-218 (DELH). The Helicase C-terminal domain occupies 320 to 551 (GDEDHIVSLC…STSQDMQTYA (232 aa)). The tract at residues 844-890 (DEEEEAAEERRSMRTIWVTGKGLSAREAAALIVEEAKMILQQDLIEM) is interaction with RAD51. A disordered region spans residues 896-955 (PKSPLSSSTHSRTSTSEVKEHTFKSQTKSSHKRLASMGRNSIRASGSNDKPSPDAERGID). Low complexity predominate over residues 898 to 911 (SPLSSSTHSRTSTS). Polar residues predominate over residues 933–945 (GRNSIRASGSNDK). Over residues 946 to 955 (PSPDAERGID) the composition is skewed to basic and acidic residues. Lys983 bears the N6-acetyllysine mark. The segment covering 1022 to 1034 (LSFSSEQVNNTLP) has biased composition (polar residues). Disordered regions lie at residues 1022-1058 (LSFS…GMHR) and 1128-1167 (VGHP…ESQL). The segment covering 1128-1139 (VGHPAAGSSPAA) has biased composition (low complexity). Residues 1140–1155 (ARDRRGLAARETEKGN) are compositionally biased toward basic and acidic residues. Ser1265 carries the post-translational modification Phosphoserine. Disordered stretches follow at residues 1266–1288 (GVQG…SNPA) and 1331–1353 (QNKC…DHVD). Phosphoserine is present on residues Ser1438, Ser1442, Ser1444, and Ser1449. Residues 1478–1501 (FSNPPHPQEDPVMTPTVSEPQGTQ) form a disordered region. Polar residues predominate over residues 1492 to 1501 (PTVSEPQGTQ). Ser1511, Ser1519, Ser1585, and Ser1592 each carry phosphoserine. Residues 1557–1591 (ECPQGKLVRGDQNEGSPKPKLTETNQDNSFTWSGA) are disordered. The span at 1578-1591 (TETNQDNSFTWSGA) shows a compositional bias: polar residues. Composition is skewed to basic and acidic residues over residues 1606–1616 (VSSPRENEKPK) and 1628–1638 (NSKESHEREEI). Residues 1606–1697 (VSSPRENEKP…GLIPPTPVPA (92 aa)) form a disordered region. A compositionally biased stretch (polar residues) spans 1641 to 1652 (DLGTVQRTSVFP). Residues 1656 to 1667 (VKNRTEGLESKA) show a composition bias toward basic and acidic residues. A Phosphothreonine modification is found at Thr1710. Positions 2052-2538 (AECESQKHVM…KVKIGASWGE (487 aa)) are DNA polymerase activity. Loop stretches follow at residues 2097-2132 (KLPP…GRQF) and 2212-2276 (EIKM…VPFP). The span at 2104–2117 (MKTQGSKKTLGSTR) shows a compositional bias: polar residues. A disordered region spans residues 2104 to 2124 (MKTQGSKKTLGSTRRGNESGR). The active-site For DNA polymerase activity is the Asp2284. Residues Asp2284 and Tyr2285 each contribute to the Mg(2+) site. Residues 2445–2489 (QLETFRSTFKSHGHRESMLQNDRTGLLPKRKLKGMFCPMRGGFFI) are loop 3. A Mg(2+)-binding site is contributed by Asp2494.

This sequence belongs to the DNA polymerase type-A family. In terms of assembly, homomultimer; forms homodimers and homotetramers. Interacts with RAD51. Interacts with ORC2 and ORC4. Interacts with RHNO1; interaction takes place during mitosis and promotes POLQ recruitment to DNA damage sites. Interacts (when phosphorylated) with TOPBP1 (via BRCT domains 7 and 8); promoting POLQ recruitment to DNA damage sites. Mg(2+) serves as cofactor. Phosphorylated by PLK1; promoting interaction with TOPBP1 and recruitment to DNA damage sites.

The protein resides in the nucleus. It is found in the chromosome. It catalyses the reaction DNA(n) + a 2'-deoxyribonucleoside 5'-triphosphate = DNA(n+1) + diphosphate. The enzyme catalyses ATP + H2O = ADP + phosphate + H(+). Functionally, low-fidelity DNA polymerase with a helicase activity that promotes microhomology-mediated end-joining (MMEJ), an alternative non-homologous end-joining (NHEJ) machinery required to repair double-strand breaks in DNA during mitosis. MMEJ is an error-prone repair pathway that produces deletions of sequences from the strand being repaired and promotes genomic rearrangements, such as telomere fusions, some of them leading to cellular transformation. MMEJ is required during mitosis to repair persistent double-strand breaks that originate in S-phase. Although error-prone, MMEJ protects against chromosomal instability and tumorigenesis. The polymerase acts by binding directly the 2 ends of resected double-strand breaks, allowing microhomologous sequences in the overhangs to form base pairs. It then extends each strand from the base-paired region using the opposing overhang as a template. Requires partially resected DNA containing 2 to 6 base pairs of microhomology to perform MMEJ. The polymerase lacks proofreading activity and is highly promiscuous: unlike most polymerases, promotes extension of ssDNA and partial ssDNA (pssDNA) substrates. When the ends of a break do not contain terminal microhomology must identify embedded complementary sequences through a scanning step. Also acts as a DNA helicase, promoting dissociation of the replication protein A complex (RPA/RP-A), composed of RPA1, RPA2 and RPA3, from resected double-strand breaks to allow their annealing and subsequent joining by MMEJ. Removal of RPA/RP-A complex proteins prevents RAD51 accumulation at resected ends, thereby inhibiting homology-recombination repair (HR) pathway. Also shows RNA-directed DNA polymerase activity to mediate DNA repair in vitro; however this activity needs additional evidence in vivo. May also have lyase activity. Involved in somatic hypermutation of immunoglobulin genes, a process that requires the activity of DNA polymerases to ultimately introduce mutations at both A/T and C/G base pairs. However, POLQ does not play a major role in somatic hypermutation. POLQ-mediated end joining activity is involved in random integration of exogenous DNA hampers. The chain is DNA polymerase theta from Mus musculus (Mouse).